Here is a 188-residue protein sequence, read N- to C-terminus: Probable manganese efflux pump MntP (188 aa).

The next 5 helical transmembrane spans lie at 3–23, 66–86, 106–128, 143–163, and 168–188; these read ITAT…ASIG, LEWN…RMII, WLLV…GLAF, ATLI…SIIG, and ILGG…HFHG.

Belongs to the MntP (TC 9.B.29) family.

The protein localises to the cell inner membrane. Probably functions as a manganese efflux pump. The sequence is that of Probable manganese efflux pump MntP from Escherichia coli O139:H28 (strain E24377A / ETEC).